The primary structure comprises 165 residues: Large ribosomal subunit protein uL10 (165 aa).

It belongs to the universal ribosomal protein uL10 family. As to quaternary structure, part of the ribosomal stalk of the 50S ribosomal subunit. The N-terminus interacts with L11 and the large rRNA to form the base of the stalk. The C-terminus forms an elongated spine to which L12 dimers bind in a sequential fashion forming a multimeric L10(L12)X complex.

Functionally, forms part of the ribosomal stalk, playing a central role in the interaction of the ribosome with GTP-bound translation factors. The sequence is that of Large ribosomal subunit protein uL10 from Buchnera aphidicola subsp. Schizaphis graminum (strain Sg).